The following is a 275-amino-acid chain: Envelope glycoprotein (275 aa).

Intrachain disulfides connect C1-C10, C18-C27, and C58-C62. N122 carries N-linked (GlcNAc...) asparagine; by host glycosylation. Intrachain disulfides connect C164–C194, C187–C239, C204–C209, and C240–C245.

It belongs to the hantavirus envelope glycoprotein family. Homodimer. Homotetramer; forms heterotetrameric Gn-Gc spikes in the pre-fusion conformation. Homotrimer; forms homotrimer in the post-fusion conformation at acidic pH. Interacts (via C-terminus) with the nucleoprotein. Post-translationally, envelope polyprotein precursor is quickly cleaved in vivo just after synthesis, presumably by host signal peptidase.

Its subcellular location is the virion membrane. The protein resides in the host cell surface. It is found in the host Golgi apparatus membrane. It localises to the host endoplasmic reticulum membrane. Functionally, forms homotetramers with glycoprotein N at the surface of the virion. Attaches the virion to host cell receptors including integrin ITGAV/ITGB3. This attachment induces virion internalization predominantly through clathrin-dependent endocytosis. Class II fusion protein that promotes fusion of viral membrane with host endosomal membrane after endocytosis of the virion. In Homo sapiens (Human), this protein is Envelope glycoprotein (GP).